The following is a 135-amino-acid chain: Probable disulfide formation protein (135 aa).

The helical transmembrane segment at 7 to 26 (SYCLYFAWLVSCIGTLMSVY) threads the bilayer. Cysteine 36 and cysteine 39 are joined by a disulfide. The next 2 membrane-spanning stretches (helical) occupy residues 41 to 60 (YQRI…AYLD) and 67 to 84 (YALP…YQVC). Cysteine 96 and cysteine 101 are joined by a disulfide. A helical transmembrane segment spans residues 109–131 (GFITMPMASALAFFAIANLLIFA).

Belongs to the DsbB family. BdbC subfamily.

It is found in the cell inner membrane. In terms of biological role, required for disulfide bond formation in some proteins. The polypeptide is Probable disulfide formation protein (Chlamydia muridarum (strain MoPn / Nigg)).